The sequence spans 122 residues: MIQMQSILEVADNSGAKKVMCIKVLGGSHHMMAKLGDVIVVSIKEAIPGGKVKKGDVYKGVIVRTKTGVVRSDGSTIKFDKNALVLLNKQDEPIGTRVFGPVTRELRAKKYVRIMSLAEEVL.

Belongs to the universal ribosomal protein uL14 family. As to quaternary structure, part of the 50S ribosomal subunit. Forms a cluster with proteins L3 and L19. In the 70S ribosome, L14 and L19 interact and together make contacts with the 16S rRNA in bridges B5 and B8.

Its function is as follows. Binds to 23S rRNA. Forms part of two intersubunit bridges in the 70S ribosome. The chain is Large ribosomal subunit protein uL14 from Rickettsia typhi (strain ATCC VR-144 / Wilmington).